The primary structure comprises 430 residues: Adenylosuccinate synthetase (430 aa).

GTP contacts are provided by residues 12-18 (GDEGKGK) and 40-42 (GHT). Aspartate 13 acts as the Proton acceptor in catalysis. Residues aspartate 13 and glycine 40 each contribute to the Mg(2+) site. IMP contacts are provided by residues 13–16 (DEGK), 38–41 (NAGH), threonine 130, arginine 144, glutamine 224, threonine 239, and arginine 303. Histidine 41 serves as the catalytic Proton donor. 299–305 (VNTGRKR) is a binding site for substrate. Residues arginine 305, 331–333 (KLD), and 413–415 (STS) each bind GTP.

It belongs to the adenylosuccinate synthetase family. Homodimer. Mg(2+) is required as a cofactor.

Its subcellular location is the cytoplasm. The enzyme catalyses IMP + L-aspartate + GTP = N(6)-(1,2-dicarboxyethyl)-AMP + GDP + phosphate + 2 H(+). It functions in the pathway purine metabolism; AMP biosynthesis via de novo pathway; AMP from IMP: step 1/2. Functionally, plays an important role in the de novo pathway of purine nucleotide biosynthesis. Catalyzes the first committed step in the biosynthesis of AMP from IMP. The chain is Adenylosuccinate synthetase from Rhodopseudomonas palustris (strain TIE-1).